The primary structure comprises 220 residues: Adenylate kinase (220 aa).

10-15 lines the ATP pocket; sequence GAGKGT. The segment at 30 to 59 is NMP; that stretch reads STGDMLRAAVKAGSPLGVEAKGYMDAGKLV. AMP is bound by residues threonine 31, arginine 36, 57 to 59, 85 to 88, and glutamine 92; these read KLV and GFPR. The interval 122–150 is disordered; sequence GRRTHPASGRTYHVKFNPPKVEGKDDVTG. Residues 122-159 form an LID region; that stretch reads GRRTHPASGRTYHVKFNPPKVEGKDDVTGEPLIQRDDD. Residues arginine 123 and 132–133 each bind ATP; that span reads TY. Residues arginine 156 and arginine 167 each contribute to the AMP site. Glycine 206 contributes to the ATP binding site.

The protein belongs to the adenylate kinase family. As to quaternary structure, monomer.

Its subcellular location is the cytoplasm. It carries out the reaction AMP + ATP = 2 ADP. The protein operates within purine metabolism; AMP biosynthesis via salvage pathway; AMP from ADP: step 1/1. In terms of biological role, catalyzes the reversible transfer of the terminal phosphate group between ATP and AMP. Plays an important role in cellular energy homeostasis and in adenine nucleotide metabolism. The protein is Adenylate kinase of Burkholderia ambifaria (strain MC40-6).